The following is a 470-amino-acid chain: Putative bifunctional phosphatase/peptidyl-prolyl cis-trans isomerase (470 aa).

Asp22 functions as the Nucleophile in the catalytic mechanism. Residues Asp22, Asp24, and Asp221 each contribute to the Mg(2+) site. In terms of domain architecture, PPIase cyclophilin-type spans 286-468; the sequence is TGPKVTIKTN…EDVIIETIEV (183 aa).

The protein in the C-terminal section; belongs to the cyclophilin-type PPIase family. PPIL1 subfamily. Mg(2+) serves as cofactor.

It carries out the reaction [protein]-peptidylproline (omega=180) = [protein]-peptidylproline (omega=0). In terms of biological role, PPIases accelerate the folding of proteins. It catalyzes the cis-trans isomerization of proline imidic peptide bonds in oligopeptides. The chain is Putative bifunctional phosphatase/peptidyl-prolyl cis-trans isomerase from Streptococcus pyogenes serotype M6 (strain ATCC BAA-946 / MGAS10394).